A 490-amino-acid polypeptide reads, in one-letter code: Ent-kaurenoic acid oxidase 1 (490 aa).

Residues 6–26 traverse the membrane as a helical segment; the sequence is SWIPVWFPLMVLGCFGLNWLV. Cysteine 439 provides a ligand contact to heme.

Belongs to the cytochrome P450 family. The cofactor is heme. As to expression, widely expressed. Highly expressed in influorescence stem, influorescence, and silique tissue. Weakly expressed in cauline and rosette leaves. Expressed at a higher level in stem and influorescence than AtKAO2/CYP88A4.

The protein resides in the endoplasmic reticulum membrane. It catalyses the reaction ent-kaur-16-en-19-oate + 3 reduced [NADPH--hemoprotein reductase] + 3 O2 = gibberellin A12 + 3 oxidized [NADPH--hemoprotein reductase] + 4 H2O + 4 H(+). It carries out the reaction ent-kaur-16-en-19-oate + reduced [NADPH--hemoprotein reductase] + O2 = ent-7alpha-hydroxykaur-16-en-19-oate + oxidized [NADPH--hemoprotein reductase] + H2O + H(+). The enzyme catalyses ent-7alpha-hydroxykaur-16-en-19-oate + reduced [NADPH--hemoprotein reductase] + O2 = gibberellin A12 aldehyde + oxidized [NADPH--hemoprotein reductase] + 2 H2O + H(+). The catalysed reaction is gibberellin A12 aldehyde + reduced [NADPH--hemoprotein reductase] + O2 = gibberellin A12 + oxidized [NADPH--hemoprotein reductase] + H2O + 2 H(+). Its pathway is plant hormone biosynthesis; gibberellin biosynthesis. Functionally, catalyzes three successive oxidations of ent-kaurenoic acid giving gibberellin 12 (GA12), a key step in gibberellins (GAs) biosynthesis. GAs, which are involved many processes, including stem elongation, play a central role in plant development. This chain is Ent-kaurenoic acid oxidase 1, found in Arabidopsis thaliana (Mouse-ear cress).